The primary structure comprises 380 residues: Chaperone protein DnaJ (380 aa).

In terms of domain architecture, J spans 5–69 (DLYKVLGVEK…QKRAQYDQFG (65 aa)). The CR-type zinc-finger motif lies at 140-222 (GKKTTITYNR…CGGSGHTEQS (83 aa)). Zn(2+) is bound by residues cysteine 153, cysteine 156, cysteine 170, cysteine 173, cysteine 196, cysteine 199, cysteine 210, and cysteine 213. 4 CXXCXGXG motif repeats span residues 153 to 160 (CETCGGSG), 170 to 177 (CSKCHGAG), 196 to 203 (CDVCHGTG), and 210 to 217 (CATCGGSG).

This sequence belongs to the DnaJ family. Homodimer. It depends on Zn(2+) as a cofactor.

It is found in the cytoplasm. Functionally, participates actively in the response to hyperosmotic and heat shock by preventing the aggregation of stress-denatured proteins and by disaggregating proteins, also in an autonomous, DnaK-independent fashion. Unfolded proteins bind initially to DnaJ; upon interaction with the DnaJ-bound protein, DnaK hydrolyzes its bound ATP, resulting in the formation of a stable complex. GrpE releases ADP from DnaK; ATP binding to DnaK triggers the release of the substrate protein, thus completing the reaction cycle. Several rounds of ATP-dependent interactions between DnaJ, DnaK and GrpE are required for fully efficient folding. Also involved, together with DnaK and GrpE, in the DNA replication of plasmids through activation of initiation proteins. The protein is Chaperone protein DnaJ of Lactiplantibacillus plantarum (strain ATCC BAA-793 / NCIMB 8826 / WCFS1) (Lactobacillus plantarum).